Here is a 554-residue protein sequence, read N- to C-terminus: Solute carrier family 22 member 2 (554 aa).

Residues 1–21 lie on the Cytoplasmic side of the membrane; the sequence is MPTVDDILEQVGHFHFFQKQT. The helical transmembrane segment at 22–42 threads the bilayer; that stretch reads FFLLALISAAFTPIYVGIVFL. Residues 43–149 are Extracellular-facing; sequence GFTPDHRCRS…LVCARSWMLD (107 aa). Residue asparagine 71 is glycosylated (N-linked (GlcNAc...) asparagine). Residues 150 to 170 traverse the membrane as a helical segment; the sequence is LFQSAVNIGFFIGSVGIGYLA. At 171-176 the chain is on the cytoplasmic side; sequence DRFGRK. Residues 177–197 form a helical membrane-spanning segment; it reads LCLLVTILINAAAGVLMAVSP. Asparagine 198 is a glycosylation site (N-linked (GlcNAc...) asparagine). Over 198–209 the chain is Extracellular; sequence NYTWMLIFRLIQ. A helical transmembrane segment spans residues 210-230; it reads GLVSKAGWLIGYILITEFVGL. Over 231 to 237 the chain is Cytoplasmic; sequence NYRRTVG. The helical transmembrane segment at 238 to 258 threads the bilayer; it reads ILYQVAFTVGLLVLAGVAYAL. Residues 259–262 are Extracellular-facing; that stretch reads PRWR. The helical transmembrane segment at 263-283 threads the bilayer; the sequence is WLQLTVTLPYFCFLLYYWCIP. Residues 283 to 287 carry the Proline-rich sequence motif; the sequence is PESPR. The Cytoplasmic segment spans residues 284 to 348; the sequence is ESPRWLISQN…RTPQIRKHTC (65 aa). Residues 349-369 traverse the membrane as a helical segment; that stretch reads ILMYNWFTSSVLYQGLIMHLG. Over 370–374 the chain is Extracellular; sequence LAGGD. The helical transmembrane segment at 375–395 threads the bilayer; it reads IYLDFFYSALVEFPAAFLIIA. The Cytoplasmic segment spans residues 396 to 403; the sequence is TIDRVGRR. A helical transmembrane segment spans residues 404–424; the sequence is YPWAVSNMVAGAACLASVFVP. Topologically, residues 425-427 are extracellular; sequence DDL. Residues 428–450 traverse the membrane as a helical segment; the sequence is QGLRITVACLGRMGITMAYEMVC. At 451 to 463 the chain is on the cytoplasmic side; sequence LVNAELYPTFIRN. The chain crosses the membrane as a helical span at residues 464-484; it reads LGVLVCSSLCDVGGIVTPFLV. Residues 485-493 lie on the Extracellular side of the membrane; it reads YRLTAIWLQ. A helical transmembrane segment spans residues 494-514; that stretch reads LPLVVFAVVGLVAGGLVLMLP. Topologically, residues 515–554 are cytoplasmic; the sequence is ETKGRTLPETIEEAENLQRPRKNREKVIYVHVRKADGPLT.

The protein belongs to the major facilitator (TC 2.A.1) superfamily. Organic cation transporter (TC 2.A.1.19) family. Post-translationally, tyrosine phosphorylated. In terms of tissue distribution, expressed in kidney.

It is found in the basolateral cell membrane. The protein resides in the basal cell membrane. It carries out the reaction (R)-noradrenaline(out) = (R)-noradrenaline(in). It catalyses the reaction (R)-adrenaline(out) = (R)-adrenaline(in). The enzyme catalyses serotonin(out) = serotonin(in). The catalysed reaction is dopamine(out) = dopamine(in). It carries out the reaction histamine(out) = histamine(in). It catalyses the reaction thiamine(in) = thiamine(out). The enzyme catalyses creatinine(in) = creatinine(out). The catalysed reaction is 1-methylnicotinamide(out) = 1-methylnicotinamide(in). It carries out the reaction guanidine(out) = guanidine(in). It catalyses the reaction choline(out) = choline(in). The enzyme catalyses agmatine(out) = agmatine(in). The catalysed reaction is putrescine(out) = putrescine(in). It carries out the reaction spermidine(in) = spermidine(out). It catalyses the reaction tyramine(in) = tyramine(out). The enzyme catalyses L-histidyl-L-proline diketopiperazine(in) = L-histidyl-L-proline diketopiperazine(out). The catalysed reaction is (R)-salsolinol(in) = (R)-salsolinol(out). It carries out the reaction N-methyl-(R)-salsolinol(in) = N-methyl-(R)-salsolinol(out). It catalyses the reaction acetylcholine(in) = acetylcholine(out). The enzyme catalyses prostaglandin F2alpha(out) = prostaglandin F2alpha(in). The catalysed reaction is prostaglandin E2(out) = prostaglandin E2(in). Its activity is regulated as follows. Tyrosine phosphorylation of the transporter leads to activation of the transport activity. Inhibited by cGMP, most likely through a cGMP-binding protein that interacts with OCT2. In terms of biological role, electrogenic voltage-dependent transporter that mediates the transport of a variety of organic cations such as endogenous bioactive amines, cationic drugs and xenobiotics. Functions as a Na(+)-independent, bidirectional uniporter. Cation cellular uptake or release is driven by the electrochemical potential, i.e. membrane potential and concentration gradient. However, may also engage electroneutral cation exchange when saturating concentrations of cation substrates are reached. Predominantly expressed at the basolateral membrane of hepatocytes and proximal tubules and involved in the uptake and disposition of cationic compounds by hepatic and renal clearance from the blood flow. Implicated in monoamine neurotransmitters uptake such as histamine, dopamine, adrenaline/epinephrine, noradrenaline/norepinephrine, serotonin and tyramine, thereby supporting a physiological role in the central nervous system by regulating interstitial concentrations of neurotransmitters. Also capable of transporting dopaminergic neuromodulators cyclo(his-pro), salsolinol and N-methyl-salsolinol, thereby involved in the maintenance of dopaminergic cell integrity in the central nervous system. Mediates the bidirectional transport of acetylcholine (ACh) at the apical membrane of ciliated cell in airway epithelium, thereby playing a role in luminal release of ACh from bronchial epithelium. Also transports guanidine and endogenous monoamines such as vitamin B1/thiamine, creatinine and N-1-methylnicotinamide (NMN). Mediates the uptake and efflux of quaternary ammonium compound choline. Mediates the bidirectional transport of polyamine agmatine and the uptake of polyamines putrescine and spermidine. Able to transport non-amine endogenous compounds such as prostaglandin E2 (PGE2) and prostaglandin F2-alpha (PGF2-alpha). Also involved in the uptake of xenobiotic 4-(4-(dimethylamino)styryl)-N-methylpyridinium (ASP). May contribute to regulate the transport of organic compounds in testis across the blood-testis-barrier. In Oryctolagus cuniculus (Rabbit), this protein is Solute carrier family 22 member 2 (SLC22A2).